The following is an 887-amino-acid chain: Alanine--tRNA ligase (887 aa).

Residues H565, H569, C674, and H678 each coordinate Zn(2+).

The protein belongs to the class-II aminoacyl-tRNA synthetase family. It depends on Zn(2+) as a cofactor.

The protein resides in the cytoplasm. The catalysed reaction is tRNA(Ala) + L-alanine + ATP = L-alanyl-tRNA(Ala) + AMP + diphosphate. Functionally, catalyzes the attachment of alanine to tRNA(Ala) in a two-step reaction: alanine is first activated by ATP to form Ala-AMP and then transferred to the acceptor end of tRNA(Ala). Also edits incorrectly charged Ser-tRNA(Ala) and Gly-tRNA(Ala) via its editing domain. This chain is Alanine--tRNA ligase, found in Erythrobacter litoralis (strain HTCC2594).